Here is a 460-residue protein sequence, read N- to C-terminus: tRNA modification GTPase MnmE (460 aa).

(6S)-5-formyl-5,6,7,8-tetrahydrofolate-binding residues include Arg25, Glu87, and Arg126. A TrmE-type G domain is found at 221-381 (GLKVAIVGRP…LETAIANLVQ (161 aa)). Residue Asn231 participates in K(+) binding. GTP-binding positions include 231–236 (NVGKSS), 250–256 (TDLPGTT), and 275–278 (DTAG). Position 235 (Ser235) interacts with Mg(2+). Residues Thr250, Leu252, and Thr255 each contribute to the K(+) site. Position 256 (Thr256) interacts with Mg(2+). Lys460 is a binding site for (6S)-5-formyl-5,6,7,8-tetrahydrofolate.

This sequence belongs to the TRAFAC class TrmE-Era-EngA-EngB-Septin-like GTPase superfamily. TrmE GTPase family. In terms of assembly, homodimer. Heterotetramer of two MnmE and two MnmG subunits. The cofactor is K(+).

The protein resides in the cytoplasm. Its function is as follows. Exhibits a very high intrinsic GTPase hydrolysis rate. Involved in the addition of a carboxymethylaminomethyl (cmnm) group at the wobble position (U34) of certain tRNAs, forming tRNA-cmnm(5)s(2)U34. The sequence is that of tRNA modification GTPase MnmE from Picosynechococcus sp. (strain ATCC 27264 / PCC 7002 / PR-6) (Agmenellum quadruplicatum).